A 160-amino-acid polypeptide reads, in one-letter code: Ribosomal RNA large subunit methyltransferase H (160 aa).

S-adenosyl-L-methionine-binding positions include Leu-76, Gly-108, and 127–132 (FGFMTW).

It belongs to the RNA methyltransferase RlmH family. In terms of assembly, homodimer.

The protein localises to the cytoplasm. It carries out the reaction pseudouridine(1915) in 23S rRNA + S-adenosyl-L-methionine = N(3)-methylpseudouridine(1915) in 23S rRNA + S-adenosyl-L-homocysteine + H(+). Specifically methylates the pseudouridine at position 1915 (m3Psi1915) in 23S rRNA. In Bartonella henselae (strain ATCC 49882 / DSM 28221 / CCUG 30454 / Houston 1) (Rochalimaea henselae), this protein is Ribosomal RNA large subunit methyltransferase H.